Here is a 228-residue protein sequence, read N- to C-terminus: Urease accessory protein UreF (228 aa).

It belongs to the UreF family. In terms of assembly, ureD, UreF and UreG form a complex that acts as a GTP-hydrolysis-dependent molecular chaperone, activating the urease apoprotein by helping to assemble the nickel containing metallocenter of UreC. The UreE protein probably delivers the nickel.

It is found in the cytoplasm. Functionally, required for maturation of urease via the functional incorporation of the urease nickel metallocenter. This Prochlorococcus marinus (strain MIT 9215) protein is Urease accessory protein UreF.